We begin with the raw amino-acid sequence, 303 residues long: Mitochondrial carrier homolog 2 (303 aa).

At Ala-2 the chain carries N-acetylalanine. The Mitochondrial intermembrane portion of the chain corresponds to 2–15; the sequence is ADAASQVLLGSGLT. 2 Solcar repeats span residues 2–98 and 118–206; these read ADAA…YQES and DRVI…INTY. Residues 16–36 form a helical membrane-spanning segment; it reads ILSQPLMYVKVLIQVGYEPLP. The Cytoplasmic portion of the chain corresponds to 37–77; sequence PTIGRNIFGRQVCQLPGLFCYAQHIASIDGRRGLFTGLTPR. The helical transmembrane segment at 78–92 threads the bilayer; it reads LCSGVLGTVVHGKVL. Residues 93–135 are Mitochondrial intermembrane-facing; it reads QYYQESEKPEELGSVTVQKEYSSSFDRVIKETTREMIARSAAT. The chain crosses the membrane as a helical span at residues 136–156; it reads LITHPFHVITLRSMVQFIGRE. Topologically, residues 157 to 180 are cytoplasmic; it reads SKYCGLCDSIVTIYREEGIVGFFA. The chain crosses the membrane as a helical span at residues 181 to 199; the sequence is GLIPRLLGDIISLWLCNSL. Residues 200-231 lie on the Mitochondrial intermembrane side of the membrane; sequence AYLINTYALDSGVSTMNEMKSYSQAVTGFFAS. Residues 232–252 form a helical membrane-spanning segment; sequence MLTYPFVLVSNLMAVNNCGLA. The Cytoplasmic portion of the chain corresponds to 253–280; the sequence is GGSPPYSPIYTSWIDCWCMLQKAGNMSR. Residues 281–303 traverse the membrane as a helical segment; sequence GNSLFFRKVPCGKTYCYDLRMLI.

It belongs to the mitochondrial carrier (TC 2.A.29) family. Interacts with p15BID. Expressed in a wide variety of tissues. Predominant expressed in liver, kidney, heart, skeletal muscle and testis.

The protein resides in the mitochondrion outer membrane. Functionally, protein insertase that mediates insertion of transmembrane proteins into the mitochondrial outer membrane. Catalyzes insertion of proteins with alpha-helical transmembrane regions, such as signal-anchored, tail-anchored and multi-pass membrane proteins. Does not mediate insertion of beta-barrel transmembrane proteins. Also acts as a receptor for the truncated form of pro-apoptotic BH3-interacting domain death agonist (p15 BID) and has therefore a critical function in apoptosis. Regulates the quiescence/cycling of hematopoietic stem cells (HSCs). Acts as a regulator of mitochondrial fusion, essential for the naive-to-primed interconversion of embryonic stem cells (ESCs). Acts as a regulator of lipid homeostasis and has a regulatory role in adipocyte differentiation and biology. The sequence is that of Mitochondrial carrier homolog 2 from Mus musculus (Mouse).